A 1119-amino-acid chain; its full sequence is DNA-directed RNA polymerase subunit beta (1119 aa).

The protein belongs to the RNA polymerase beta chain family. The RNAP catalytic core consists of 2 alpha, 1 beta, 1 beta' and 1 omega subunit. When a sigma factor is associated with the core the holoenzyme is formed, which can initiate transcription.

The catalysed reaction is RNA(n) + a ribonucleoside 5'-triphosphate = RNA(n+1) + diphosphate. Functionally, DNA-dependent RNA polymerase catalyzes the transcription of DNA into RNA using the four ribonucleoside triphosphates as substrates. The polypeptide is DNA-directed RNA polymerase subunit beta (Thermus aquaticus).